Here is a 338-residue protein sequence, read N- to C-terminus: Cinnamoyl-CoA reductase 1 (338 aa).

Residues 22–28 (GAGGFIG), R47, K53, 73–74 (DV), 93–95 (VAS), Y165, K169, 192–195 (PSMT), and S207 contribute to the NADP(+) site. An intrachain disulfide couples C158 to C166. The active-site Proton donor is the K169.

It belongs to the NAD(P)-dependent epimerase/dehydratase family. Dihydroflavonol-4-reductase subfamily. In terms of assembly, interacts with RAC1 in a GTP-dependent manner.

It is found in the cytoplasm. The enzyme catalyses (E)-cinnamaldehyde + NADP(+) + CoA = (E)-cinnamoyl-CoA + NADPH + H(+). It participates in aromatic compound metabolism; phenylpropanoid biosynthesis. Activated by the small GTPase RAC1. Involved in the latter stages of lignin biosynthesis. Catalyzes one of the last steps of monolignol biosynthesis, the conversion of cinnamoyl-CoAs into their corresponding cinnamaldehydes. Probably involved in the formation of lignin in defense responses. This chain is Cinnamoyl-CoA reductase 1, found in Oryza sativa subsp. japonica (Rice).